The chain runs to 228 residues: 5'-methylthioadenosine/S-adenosylhomocysteine nucleosidase (228 aa).

The Proton acceptor role is filled by E11. Substrate contacts are provided by residues G77, I151, and 172 to 173 (ME). The active-site Proton donor is the D196.

It belongs to the PNP/UDP phosphorylase family. MtnN subfamily.

The enzyme catalyses S-adenosyl-L-homocysteine + H2O = S-(5-deoxy-D-ribos-5-yl)-L-homocysteine + adenine. The catalysed reaction is S-methyl-5'-thioadenosine + H2O = 5-(methylsulfanyl)-D-ribose + adenine. It carries out the reaction 5'-deoxyadenosine + H2O = 5-deoxy-D-ribose + adenine. It functions in the pathway amino-acid biosynthesis; L-methionine biosynthesis via salvage pathway; S-methyl-5-thio-alpha-D-ribose 1-phosphate from S-methyl-5'-thioadenosine (hydrolase route): step 1/2. Functionally, catalyzes the irreversible cleavage of the glycosidic bond in both 5'-methylthioadenosine (MTA) and S-adenosylhomocysteine (SAH/AdoHcy) to adenine and the corresponding thioribose, 5'-methylthioribose and S-ribosylhomocysteine, respectively. Also cleaves 5'-deoxyadenosine, a toxic by-product of radical S-adenosylmethionine (SAM) enzymes, into 5-deoxyribose and adenine. In Staphylococcus haemolyticus (strain JCSC1435), this protein is 5'-methylthioadenosine/S-adenosylhomocysteine nucleosidase.